A 403-amino-acid polypeptide reads, in one-letter code: Probable tRNA sulfurtransferase (403 aa).

Positions 60–165 (QLAEERLKPI…KEGVFLSCRT (106 aa)) constitute a THUMP domain. Residues 183–184 (ML), 208–209 (HF), R265, G287, and Q296 each bind ATP.

This sequence belongs to the ThiI family.

It is found in the cytoplasm. It carries out the reaction [ThiI sulfur-carrier protein]-S-sulfanyl-L-cysteine + a uridine in tRNA + 2 reduced [2Fe-2S]-[ferredoxin] + ATP + H(+) = [ThiI sulfur-carrier protein]-L-cysteine + a 4-thiouridine in tRNA + 2 oxidized [2Fe-2S]-[ferredoxin] + AMP + diphosphate. It catalyses the reaction [ThiS sulfur-carrier protein]-C-terminal Gly-Gly-AMP + S-sulfanyl-L-cysteinyl-[cysteine desulfurase] + AH2 = [ThiS sulfur-carrier protein]-C-terminal-Gly-aminoethanethioate + L-cysteinyl-[cysteine desulfurase] + A + AMP + 2 H(+). It participates in cofactor biosynthesis; thiamine diphosphate biosynthesis. In terms of biological role, catalyzes the ATP-dependent transfer of a sulfur to tRNA to produce 4-thiouridine in position 8 of tRNAs, which functions as a near-UV photosensor. Also catalyzes the transfer of sulfur to the sulfur carrier protein ThiS, forming ThiS-thiocarboxylate. This is a step in the synthesis of thiazole, in the thiamine biosynthesis pathway. The sulfur is donated as persulfide by IscS. The polypeptide is Probable tRNA sulfurtransferase (Listeria monocytogenes serovar 1/2a (strain ATCC BAA-679 / EGD-e)).